The sequence spans 225 residues: Transmembrane protein 40 (225 aa).

At Met-1 the chain carries N-acetylmethionine. Residues 1-14 are compositionally biased toward low complexity; that stretch reads MEASGSSSQSQDSG. Residues 1-96 are disordered; sequence MEASGSSSQS…RRDSLRGADH (96 aa). The span at 15–29 shows a compositional bias: basic and acidic residues; the sequence is GVHRETEDHYQETEL. Residues 30–39 are compositionally biased toward basic residues; it reads HKHHGKARER. Residues 46–68 show a composition bias toward low complexity; sequence SSSSSSSSSSSSSSSSSSSSSSD. Over residues 78 to 87 the composition is skewed to basic residues; sequence GPRKHRRRPR. Residue Ser-129 is modified to Phosphoserine. The next 2 membrane-spanning stretches (helical) occupy residues 152 to 172 and 179 to 199; these read FFHFVLLCFAIGALLVCYHYY and LGVGLLTFASLETIGIYFGLV.

Its subcellular location is the membrane. This chain is Transmembrane protein 40 (Tmem40), found in Mus musculus (Mouse).